Consider the following 84-residue polypeptide: Small ribosomal subunit protein bS20 (84 aa).

The tract at residues 1-32 is disordered; that stretch reads MPRHESAKKRMRQNEKRQKRNKSQKSRVRTKI.

It belongs to the bacterial ribosomal protein bS20 family.

Functionally, binds directly to 16S ribosomal RNA. In Salinibacter ruber (strain DSM 13855 / M31), this protein is Small ribosomal subunit protein bS20.